Here is a 151-residue protein sequence, read N- to C-terminus: Large ribosomal subunit protein bL9 (151 aa).

This sequence belongs to the bacterial ribosomal protein bL9 family.

In terms of biological role, binds to the 23S rRNA. The sequence is that of Large ribosomal subunit protein bL9 from Thermosipho africanus (strain TCF52B).